The primary structure comprises 523 residues: Pituitary adenylate cyclase-activating polypeptide type I receptor (523 aa).

Positions M1–A19 are cleaved as a signal peptide. At M20 to S151 the chain is on the extracellular side. 3 cysteine pairs are disulfide-bonded: C33-C62, C53-C117, and C76-C133. N-linked (GlcNAc...) asparagine glycans are attached at residues N47, N59, and N116. The tract at residues E124–Y138 is important for ADCYAP1/PACAP ligand binding and specificity. The interval E124–Y138 is important for ligand binding and specificity. A helical transmembrane segment spans residues V152–R176. Over F177 to F186 the chain is Cytoplasmic. The chain crosses the membrane as a helical span at residues I187–W207. Over I208–T222 the chain is Extracellular. A helical transmembrane segment spans residues V223 to L248. Residues C225 and C295 are joined by a disulfide bond. The Cytoplasmic segment spans residues Y249 to Y266. A helical transmembrane segment spans residues W267–Y289. Over F290–S301 the chain is Extracellular. Residues T302–I328 traverse the membrane as a helical segment. Residues I329 to I346 are Cytoplasmic-facing. Residues Y347–E429 traverse the membrane as a helical segment. Topologically, residues N430–R434 are extracellular. The chain crosses the membrane as a helical span at residues E435–L458. Over N459 to T523 the chain is Cytoplasmic. A phosphoserine mark is found at S489 and S502.

This sequence belongs to the G-protein coupled receptor 2 family. Interacts with maxadilan, a vasodilator peptide from Lutzomyia longipalpis saliva; the interaction results in ADCYAP1R1 activation. Hypothalamus, anterior pituitary, adrenal medulla, testicular germ cells.

It localises to the cell membrane. Functionally, g protein-coupled receptor activated by the neuropeptide pituitary adenylate cyclase-activating polypeptide (ADCYAP1/PACAP). Binds both PACAP27 and PACAP38 bioactive peptides. Ligand binding causes a conformation change that triggers signaling via guanine nucleotide-binding proteins (G proteins) and modulates the activity of downstream effectors. Activates cAMP-dependent pathway. May regulate the release of adrenocorticotropin, luteinizing hormone, growth hormone, prolactin, epinephrine, and catecholamine. May play a role in spermatogenesis and sperm motility. Causes smooth muscle relaxation and secretion in the gastrointestinal tract. The polypeptide is Pituitary adenylate cyclase-activating polypeptide type I receptor (Rattus norvegicus (Rat)).